We begin with the raw amino-acid sequence, 183 residues long: MDLNISTALRSFTQRYIDLWQQQTGHLPASKELYGVPSPCIVETGEDQVFWQPQAFLPEATLTNIERALEIQLHPDIHDFYTQQYAGDMMADLGNHRFTLLQVWSEDDFIRLQENLIGHLVTQKRLKLSPTLFLATTSSEMTMASLCNVSGNVVLEQFGSDKRTLLASTLSHFLDALRPVLPE.

Belongs to the Syd family.

Its subcellular location is the cell inner membrane. Interacts with the SecY protein in vivo. May bind preferentially to an uncomplexed state of SecY, thus functioning either as a chelating agent for excess SecY in the cell or as a regulatory factor that negatively controls the translocase function. This is Protein Syd from Yersinia pestis bv. Antiqua (strain Antiqua).